Reading from the N-terminus, the 622-residue chain is Pentatricopeptide repeat-containing protein At5g06540 (622 aa).

PPR repeat units lie at residues 81–115, 116–150, 151–181, 182–212, 213–247, 248–282, 283–313, 314–348, 349–384, and 385–419; these read NLFV…RIWP, DNIT…GFQN, DVYV…MGFR, DVVS…MPHR, NLFT…GVVA, NETV…HMTV, NLIL…LPET, DSLS…GFIP, RDVT…GIEP, and RLEH…PNAP. A type E motif region spans residues 420-495; that stretch reads ILGALLGACK…PPGWSLIEID (76 aa). The type E(+) motif stretch occupies residues 496–527; it reads GKINKFTMGDDQKHPEMGKIRRKWEEILGKIR. Residues 528 to 622 are type DYW motif; it reads LIGYKGNTGD…NGVCSCRDYW (95 aa).

It belongs to the PPR family. PCMP-H subfamily.

In Arabidopsis thaliana (Mouse-ear cress), this protein is Pentatricopeptide repeat-containing protein At5g06540 (PCMP-H88).